We begin with the raw amino-acid sequence, 575 residues long: V-type ATP synthase alpha chain (575 aa).

Residue 238-245 (GPFGAGKT) coordinates ATP.

It belongs to the ATPase alpha/beta chains family.

It catalyses the reaction ATP + H2O + 4 H(+)(in) = ADP + phosphate + 5 H(+)(out). Its function is as follows. Produces ATP from ADP in the presence of a proton gradient across the membrane. The V-type alpha chain is a catalytic subunit. This chain is V-type ATP synthase alpha chain, found in Borreliella burgdorferi (strain ZS7) (Borrelia burgdorferi).